We begin with the raw amino-acid sequence, 413 residues long: Nucleoporin NUP42 (413 aa).

Residues 1–25 (MTICQFFLQGRCRFGDRCWNEHPRG) form a C3H1-type zinc finger. 6 FG repeats span residues 14-15 (FG), 79-80 (FG), 217-218 (FG), 225-226 (FG), 269-270 (FG), and 313-314 (FG). The segment at 252–293 (GNAAAVGSSAAASNPPTFGVTSSPSVPNPVGSGNSSAPSAAS) is disordered. Positions 321-357 (SSSTAPLPVSATPSAATGTSQSGASSASAAQTAGASG) are enriched in low complexity. The disordered stretch occupies residues 321 to 369 (SSSTAPLPVSATPSAATGTSQSGASSASAAQTAGASGHNVTSAPSAVPN).

As to quaternary structure, probable component of the nuclear pore complex (NPC).

Its subcellular location is the nucleus. The protein localises to the nuclear pore complex. The protein resides in the nucleus membrane. Required for the export of mRNAs containing poly(A) tails from the nucleus into the cytoplasm. The protein is Nucleoporin NUP42 (NUP42) of Gallus gallus (Chicken).